Here is a 391-residue protein sequence, read N- to C-terminus: Multidrug resistance protein MdtL (391 aa).

The Cytoplasmic segment spans residues Met-1–Arg-3. A helical membrane pass occupies residues Phe-4–Val-24. Over Gly-25 to Glu-37 the chain is Periplasmic. The chain crosses the membrane as a helical span at residues Ala-38 to Ala-58. Residues Gly-59–Ser-75 lie on the Cytoplasmic side of the membrane. A helical transmembrane segment spans residues Ala-76–Ala-96. Residues Gly-97–Arg-98 lie on the Periplasmic side of the membrane. A helical membrane pass occupies residues Phe-99–Thr-119. Topologically, residues Leu-120–Ser-130 are cytoplasmic. Residues Leu-131 to Met-151 form a helical membrane-spanning segment. The Periplasmic segment spans residues Leu-152–Gln-157. A helical membrane pass occupies residues Ser-158–Leu-178. Residues Lys-179 to Arg-202 lie on the Cytoplasmic side of the membrane. A helical membrane pass occupies residues Phe-203 to Val-222. Topologically, residues Asn-223–Met-244 are periplasmic. The chain crosses the membrane as a helical span at residues Ala-245–Phe-265. The Cytoplasmic portion of the chain corresponds to Lys-266–Arg-268. Residues Thr-269–Pro-289 traverse the membrane as a helical segment. Residues Ser-290–Ala-292 lie on the Periplasmic side of the membrane. A helical transmembrane segment spans residues Val-293 to Met-313. Over Ser-314–Thr-330 the chain is Cytoplasmic. A helical transmembrane segment spans residues Leu-331–Ile-351. At Gly-352–Asn-355 the chain is on the periplasmic side. The chain crosses the membrane as a helical span at residues Met-356 to Ala-376. At Pro-377 to Ala-391 the chain is on the cytoplasmic side.

This sequence belongs to the major facilitator superfamily. DHA1 family. MdtL (TC 2.A.1.2.22) subfamily.

The protein localises to the cell inner membrane. The sequence is that of Multidrug resistance protein MdtL from Shigella flexneri serotype 5b (strain 8401).